Reading from the N-terminus, the 292-residue chain is 4-hydroxy-tetrahydrodipicolinate synthase (292 aa).

Thr45 lines the pyruvate pocket. The Proton donor/acceptor role is filled by Tyr133. Lys161 acts as the Schiff-base intermediate with substrate in catalysis. Ile203 provides a ligand contact to pyruvate.

The protein belongs to the DapA family. Homotetramer; dimer of dimers.

The protein resides in the cytoplasm. It catalyses the reaction L-aspartate 4-semialdehyde + pyruvate = (2S,4S)-4-hydroxy-2,3,4,5-tetrahydrodipicolinate + H2O + H(+). It functions in the pathway amino-acid biosynthesis; L-lysine biosynthesis via DAP pathway; (S)-tetrahydrodipicolinate from L-aspartate: step 3/4. Its function is as follows. Catalyzes the condensation of (S)-aspartate-beta-semialdehyde [(S)-ASA] and pyruvate to 4-hydroxy-tetrahydrodipicolinate (HTPA). The polypeptide is 4-hydroxy-tetrahydrodipicolinate synthase (Salmonella typhi).